The primary structure comprises 192 residues: Interleukin-18 (192 aa).

Positions 1 to 35 (MAAMSEDSCVNFKEMMFIDNTLYFIPEENGDLESD) are excised as a propeptide.

Belongs to the IL-1 family. In terms of assembly, forms a ternary complex with ligand-binding receptor subunit IL18R1 and signaling receptor subunit IL18RAP at the plasma membrane. Mature IL18 first binds to IL18R1 forming a low affinity binary complex, which then interacts with IL18RAP to form a high affinity ternary complex that signals inside the cell. Interacts with cargo receptor TMED10; the interaction mediates the translocation from the cytoplasm into the ERGIC (endoplasmic reticulum-Golgi intermediate compartment) and thereby secretion. Post-translationally, the pro-IL-18 precursor is processed by CASP1 to yield its mature, active form. The pro-IL-18 precursor is however not processed by Casp4/Casp11 in rodents. The pro-IL-18 precursor features autoinhibitory interactions between the propeptide and the post-cleavage-site region, preventing recognition by the IL18R1 receptor. Processing by CASP1 induces conformational changes to generate critical receptor-binding sites. The mature form is then secreted and released in the extracellular milieu by passing through the gasdermin-D (GSDMD) pore. In contrast, cleavage by CASP3 inactivates IL18.

It is found in the cytoplasm. The protein localises to the secreted. Functionally, pro-inflammatory cytokine primarily involved in epithelial barrier repair, polarized T-helper 1 (Th1) cell and natural killer (NK) cell immune responses. Upon binding to IL18R1 and IL18RAP, forms a signaling ternary complex which activates NF-kappa-B, triggering synthesis of inflammatory mediators. Synergizes with IL12/interleukin-12 to induce IFNG synthesis from T-helper 1 (Th1) cells and natural killer (NK) cells. Involved in transduction of inflammation downstream of pyroptosis: its mature form is specifically released in the extracellular milieu by passing through the gasdermin-D (GSDMD) pore. The chain is Interleukin-18 from Mus musculus (Mouse).